The primary structure comprises 322 residues: Nodulation protein D 1 (322 aa).

Residues 6 to 63 (LDLNLLVALDALMTERKLTAAARSINLSQPAMSAAITRLRTYFRDELFTMNGRELVPT) form the HTH lysR-type domain. The segment at residues 23 to 42 (LTAAARSINLSQPAMSAAIT) is a DNA-binding region (H-T-H motif).

Belongs to the LysR transcriptional regulatory family.

Regulates the expression of the nod abcFE genes which encode other nodulation proteins. NodD is also a negative regulator of its own expression. Binds flavonoids as inducers. This chain is Nodulation protein D 1 (nodD1), found in Sinorhizobium fredii (strain NBRC 101917 / NGR234).